The primary structure comprises 222 residues: UPF0502 protein XAC4278 (222 aa).

It belongs to the UPF0502 family.

The polypeptide is UPF0502 protein XAC4278 (Xanthomonas axonopodis pv. citri (strain 306)).